Consider the following 497-residue polypeptide: Carboxylesterase (497 aa).

Ser185 (acyl-ester intermediate) is an active-site residue. Catalysis depends on charge relay system residues Glu319 and His415.

This sequence belongs to the type-B carboxylesterase/lipase family.

The protein localises to the secreted. It carries out the reaction a carboxylic ester + H2O = an alcohol + a carboxylate + H(+). This Thermobifida fusca (strain YX) protein is Carboxylesterase.